Consider the following 95-residue polypeptide: Costars family protein At4g33640 (95 aa).

The residue at position 1 (methionine 1) is an N-acetylmethionine.

It belongs to the costars family.

The sequence is that of Costars family protein At4g33640 from Arabidopsis thaliana (Mouse-ear cress).